Consider the following 120-residue polypeptide: MEKMGTSELLKHIYDINLSYLLLAQRIINQEKVSAMFRLGIDEAMADALASLTLPEMVKLAETNQLVCQFRFNDHQSITRLTQESRVEDLQQIHTGILLSSRLLRDVSQENKTPKKRAVS.

Belongs to the FlhD family. In terms of assembly, homodimer; disulfide-linked. Forms a heterohexamer composed of two FlhC and four FlhD subunits. Each FlhC binds a FlhD dimer, forming a heterotrimer, and a hexamer assembles by dimerization of two heterotrimers.

The protein resides in the cytoplasm. Its function is as follows. Functions in complex with FlhC as a master transcriptional regulator that regulates transcription of several flagellar and non-flagellar operons by binding to their promoter region. Activates expression of class 2 flagellar genes, including fliA, which is a flagellum-specific sigma factor that turns on the class 3 genes. Also regulates genes whose products function in a variety of physiological pathways. This chain is Flagellar transcriptional regulator FlhD, found in Erwinia tasmaniensis (strain DSM 17950 / CFBP 7177 / CIP 109463 / NCPPB 4357 / Et1/99).